The chain runs to 384 residues: ATP phosphoribosyltransferase regulatory subunit (384 aa).

The protein belongs to the class-II aminoacyl-tRNA synthetase family. HisZ subfamily. In terms of assembly, heteromultimer composed of HisG and HisZ subunits.

Its subcellular location is the cytoplasm. It participates in amino-acid biosynthesis; L-histidine biosynthesis; L-histidine from 5-phospho-alpha-D-ribose 1-diphosphate: step 1/9. Functionally, required for the first step of histidine biosynthesis. May allow the feedback regulation of ATP phosphoribosyltransferase activity by histidine. This is ATP phosphoribosyltransferase regulatory subunit from Paracidovorax citrulli (strain AAC00-1) (Acidovorax citrulli).